The following is a 93-amino-acid chain: Cell division protein FtsB (93 aa).

Topologically, residues 1–3 (MRI) are cytoplasmic. Residues 4–21 (FVIALTLLFGWLQYTLWF) form a helical membrane-spanning segment. Residues 22–93 (GKNGVSDYYT…FYRIVDEEEH (72 aa)) are Periplasmic-facing. A coiled-coil region spans residues 31-75 (TVEDEIEVQQQVNSKLQARNNEMFAEIDDLRQGLDAIEERARHEL).

The protein belongs to the FtsB family. Part of a complex composed of FtsB, FtsL and FtsQ.

Its subcellular location is the cell inner membrane. Essential cell division protein. May link together the upstream cell division proteins, which are predominantly cytoplasmic, with the downstream cell division proteins, which are predominantly periplasmic. The sequence is that of Cell division protein FtsB from Vibrio campbellii (strain ATCC BAA-1116).